The primary structure comprises 110 residues: UPF0060 membrane protein Psyr_3752 (110 aa).

4 consecutive transmembrane segments (helical) span residues 5–25 (LWFF…WLWL), 28–48 (GKSA…ALLL), 59–79 (AYAA…GLVE), and 84–104 (LGTD…ILLG).

It belongs to the UPF0060 family.

It localises to the cell inner membrane. This is UPF0060 membrane protein Psyr_3752 from Pseudomonas syringae pv. syringae (strain B728a).